Reading from the N-terminus, the 93-residue chain is Large ribosomal subunit protein uL23cz/uL23cy (93 aa).

Belongs to the universal ribosomal protein uL23 family. In terms of assembly, part of the 50S ribosomal subunit.

It localises to the plastid. It is found in the chloroplast. Functionally, binds to 23S rRNA. This Nandina domestica (Heavenly bamboo) protein is Large ribosomal subunit protein uL23cz/uL23cy (rpl23-A).